A 48-amino-acid polypeptide reads, in one-letter code: Sperm protamine P1 (48 aa).

It belongs to the protamine P1 family. Testis.

It localises to the nucleus. The protein resides in the chromosome. Protamines substitute for histones in the chromatin of sperm during the haploid phase of spermatogenesis. They compact sperm DNA into a highly condensed, stable and inactive complex. The chain is Sperm protamine P1 (PRM1) from Monophyllus redmani (Greater Antillean long-tongued bat).